The following is a 739-amino-acid chain: MEHTYQYAWVIPLLPLPVIMSMGFGLILIPTATKNLRRIWAFPSVLLLSIAMVFSVQLSIQQINGSSIYQYLWSWTVNNDFSLEFGYLIDPLTSIMLILITTVGILVLIYSDGYMSHDEGYLRFFVYISFFNTSMLGLVTSSNLIQIYFFWELVGMCSYLLIGFWFTRPIAASACQKAFVTNRVGDFGLLLGILGFFWITGSLEFRDLFKIANNWIPNNGVNSLLTTLCAFLLFLGAVAKSAQFPLHVWLPDAMEGPTPISALIQAATMVAAGIFLLARLLPLFISLPLIMSFISLVGTITLFLGATLALAQRDIKRSLAYSTMSQLGYMMLALGIGSYQAALFHLITHAYSKALLFLGSGSVIHSMEPLVGYSPDKSQNMVLMGGLRKYIPITRTTFLWGTLSLCGIPPLACFWSKDEILSNSWLYSPFFGIIASFTAGLTAFYMFRIYLLTFDGYLRVHFQNYSSTKESSLYSISLWGKRIPKGVNRDFVLSTTKSGVSFFSQNIPKIQGNTRNRIGSFTTSFGAKNTFAYPHETGNTMLFPLLILLLFTLFIGFIGISFDNGGIGNGIAELTILSKWLTPSINFTQESSNSFVNSYEFITNAISSVTLAIFGLFIAYIFYGSAYSFFQNLDLINSFYKGNPKKEFLDQVKKNIYSWSYNRGYIDIFYTRVFTLGIRGLTELTEFFDKGVIYGITNGVGLPSFCIGEEIKYVGGGRISSYLFFFLCYVSLFLFFFLS.

A run of 16 helical transmembrane segments spans residues 9–29, 39–59, 89–109, 125–145, 147–167, 185–205, 219–239, 258–278, 280–300, 327–347, 354–374, 396–416, 425–445, 542–562, 610–630, and 719–739; these read WVIP…LILI, IWAF…VQLS, IDPL…LVLI, FVYI…SNLI, IYFF…FWFT, GDFG…SLEF, NGVN…GAVA, TPIS…FLLA, LLPL…VGTI, LGYM…FHLI, ALLF…VGYS, TTFL…CFWS, WLYS…TAFY, LFPL…GISF, TLAI…YSFF, and ISSY…FFLS.

Belongs to the complex I subunit 5 family. NDH is composed of at least 16 different subunits, 5 of which are encoded in the nucleus.

The protein localises to the plastid. The protein resides in the chloroplast thylakoid membrane. The catalysed reaction is a plastoquinone + NADH + (n+1) H(+)(in) = a plastoquinol + NAD(+) + n H(+)(out). It catalyses the reaction a plastoquinone + NADPH + (n+1) H(+)(in) = a plastoquinol + NADP(+) + n H(+)(out). NDH shuttles electrons from NAD(P)H:plastoquinone, via FMN and iron-sulfur (Fe-S) centers, to quinones in the photosynthetic chain and possibly in a chloroplast respiratory chain. The immediate electron acceptor for the enzyme in this species is believed to be plastoquinone. Couples the redox reaction to proton translocation, and thus conserves the redox energy in a proton gradient. This is NAD(P)H-quinone oxidoreductase subunit 5, chloroplastic (ndhF) from Triticum aestivum (Wheat).